Here is a 191-residue protein sequence, read N- to C-terminus: Ion-translocating oxidoreductase complex subunit B (191 aa).

Residues 1–26 form a hydrophobic region; that stretch reads MSLVLVAVLALLGLCLIAGAILGFAA. The 4Fe-4S domain maps to 32 to 90; that stretch reads EGDPIAEQINALLPQTQCGQCGYPGCKPYAEAIAGGDKINKCPPGGEATIQALADLLDV. 12 residues coordinate [4Fe-4S] cluster: cysteine 49, cysteine 52, cysteine 57, cysteine 73, cysteine 114, cysteine 117, cysteine 120, cysteine 124, cysteine 144, cysteine 147, cysteine 150, and cysteine 154. 4Fe-4S ferredoxin-type domains are found at residues 105-134 and 135-164; these read MVAF…GAAR and QMHT…MIEV.

This sequence belongs to the 4Fe4S bacterial-type ferredoxin family. RnfB subfamily. The complex is composed of six subunits: RnfA, RnfB, RnfC, RnfD, RnfE and RnfG. [4Fe-4S] cluster is required as a cofactor.

The protein localises to the cell inner membrane. Its function is as follows. Part of a membrane-bound complex that couples electron transfer with translocation of ions across the membrane. The sequence is that of Ion-translocating oxidoreductase complex subunit B from Ectopseudomonas mendocina (strain ymp) (Pseudomonas mendocina).